The sequence spans 427 residues: Inorganic pyrophosphatase 1 (427 aa).

Residues 36–52 show a composition bias toward low complexity; that stretch reads SSSSNTATTSTSSSNTS. Disordered stretches follow at residues 36-63 and 77-118; these read SSSS…TSRP and SMDS…RSLH. 2 stretches are compositionally biased toward polar residues: residues 53–63 and 77–114; these read QKWATSRTSRP and SMDS…ANSE. 3 residues coordinate Mg(2+): Asp259, Asp264, and Asp296.

The protein belongs to the PPase family. The cofactor is Mg(2+). In terms of tissue distribution, expressed in coelomocytes, the intestine and in the nervous system including the nerve cords and sensory neurons.

The protein resides in the cytoplasm. It carries out the reaction diphosphate + H2O = 2 phosphate + H(+). Catalyzes the hydrolysis of inorganic pyrophosphate (PPi) forming two phosphate ions. Plays a role in intestinal development and subsequent normal secretory, digestive and absorption functions. Required for larval development. This chain is Inorganic pyrophosphatase 1, found in Caenorhabditis elegans.